Consider the following 362-residue polypeptide: Putative glutamate--cysteine ligase 2-1 (362 aa).

It belongs to the glutamate--cysteine ligase type 2 family. YbdK subfamily.

It catalyses the reaction L-cysteine + L-glutamate + ATP = gamma-L-glutamyl-L-cysteine + ADP + phosphate + H(+). ATP-dependent carboxylate-amine ligase which exhibits weak glutamate--cysteine ligase activity. The sequence is that of Putative glutamate--cysteine ligase 2-1 from Streptomyces avermitilis (strain ATCC 31267 / DSM 46492 / JCM 5070 / NBRC 14893 / NCIMB 12804 / NRRL 8165 / MA-4680).